A 461-amino-acid polypeptide reads, in one-letter code: Argininosuccinate lyase (461 aa).

The protein belongs to the lyase 1 family. Argininosuccinate lyase subfamily.

Its subcellular location is the cytoplasm. The enzyme catalyses 2-(N(omega)-L-arginino)succinate = fumarate + L-arginine. The protein operates within amino-acid biosynthesis; L-arginine biosynthesis; L-arginine from L-ornithine and carbamoyl phosphate: step 3/3. In Nitrosomonas europaea (strain ATCC 19718 / CIP 103999 / KCTC 2705 / NBRC 14298), this protein is Argininosuccinate lyase.